A 762-amino-acid polypeptide reads, in one-letter code: MMSSIVSWWFFWVISAVCILKVEFNIVEGGAYEETKVHIVYLGEKEHNDPELVTSSHLRMLESLLGSKKDASESIVHSYRNGFSGFAAHLTDSQAEQISEHPDVVQVTPNTFYELQTTRTFDYLGLSHSTPKGLLHEAKMGEDIIIGVLDSGVWPESQSFNDKGLGPIPKRWKGMCVDGEDFDSKKHCNKKLIGARYYMDSLFRRNKTDSGIPDTEYMSARESLPHGTHVASTAGGSFVSNVSDNGFGVGTIRGGAPRARIAVYKVCWQRVDRTCASADIIKAMDDAIADGVDLITISIGRPNPVLTEVDVYNQISYGAFHAVAKGIPVLSAGGNFGPGAYTVQNIAPWIITVAATTLDRWYPTPLTLGNNVTLMARTPYKGNEIQGDLMFVYSPDEMTSAAKGKVVLTFTTGSEESQAGYVTKLFQVEAKSVIIAAKRNDVIKVSEGLPIIMVDYEHGSTIWKYLSITRMPTIKISSAIALNGRLVATKVADFSGRGPNSISPYVLKPDVAAPGVAIVAASTPESMGTEEGFAIQSGTSMSTPVVAGLVALLRAVHPDWSPAALKSALITTASTTDPYGEPIFSEGMTRKLADPFDFGGGLVNPNKAADPGLVYDISAEDYRLFLCASHYDEKQITKISKTHTPYRCPSPKPSMLDLNLPSITIPFLKEDVTLTRTVTNVGPVDSVYKLIVEPPLGVKISVTPNTLLFNSNVKILSYKVTVSTTHKSNSIYYFGSLTWTDGSHKVTIPLSVRTQMLMYFDQ.

The signal sequence occupies residues 1–16 (MMSSIVSWWFFWVISA). Residues 17–116 (VCILKVEFNI…VTPNTFYELQ (100 aa)) constitute a propeptide, activation peptide. The 79-residue stretch at 37-115 (VHIVYLGEKE…QVTPNTFYEL (79 aa)) folds into the Inhibitor I9 domain. A Peptidase S8 domain is found at 120 to 609 (TFDYLGLSHS…GGLVNPNKAA (490 aa)). D150 serves as the catalytic Charge relay system. N206 carries N-linked (GlcNAc...) asparagine glycosylation. The Charge relay system role is filled by H226. 2 N-linked (GlcNAc...) asparagine glycosylation sites follow: N241 and N371. S540 acts as the Charge relay system in catalysis.

The protein belongs to the peptidase S8 family.

It is found in the secreted. This is Subtilisin-like protease SBT3.11 from Arabidopsis thaliana (Mouse-ear cress).